The primary structure comprises 283 residues: 2-dehydro-3-deoxyphosphooctonate aldolase (283 aa).

This sequence belongs to the KdsA family.

The protein localises to the cytoplasm. The catalysed reaction is D-arabinose 5-phosphate + phosphoenolpyruvate + H2O = 3-deoxy-alpha-D-manno-2-octulosonate-8-phosphate + phosphate. It functions in the pathway carbohydrate biosynthesis; 3-deoxy-D-manno-octulosonate biosynthesis; 3-deoxy-D-manno-octulosonate from D-ribulose 5-phosphate: step 2/3. The protein operates within bacterial outer membrane biogenesis; lipopolysaccharide biosynthesis. This chain is 2-dehydro-3-deoxyphosphooctonate aldolase, found in Vibrio parahaemolyticus serotype O3:K6 (strain RIMD 2210633).